A 45-amino-acid chain; its full sequence is Photosystem II reaction center protein K (45 aa).

Positions 1-8 are excised as a propeptide; sequence MEAALLLA. Residues 24–44 form a helical membrane-spanning segment; that stretch reads LPIIPLFFLALAFVWQAAVGF.

The protein belongs to the PsbK family. PSII is composed of 1 copy each of membrane proteins PsbA, PsbB, PsbC, PsbD, PsbE, PsbF, PsbH, PsbI, PsbJ, PsbK, PsbL, PsbM, PsbT, PsbX, PsbY, PsbZ, Psb30/Ycf12, peripheral proteins PsbO, CyanoQ (PsbQ), PsbU, PsbV and a large number of cofactors. It forms dimeric complexes.

Its subcellular location is the cellular thylakoid membrane. Functionally, one of the components of the core complex of photosystem II (PSII). PSII is a light-driven water:plastoquinone oxidoreductase that uses light energy to abstract electrons from H(2)O, generating O(2) and a proton gradient subsequently used for ATP formation. It consists of a core antenna complex that captures photons, and an electron transfer chain that converts photonic excitation into a charge separation. This is Photosystem II reaction center protein K from Rippkaea orientalis (strain PCC 8801 / RF-1) (Cyanothece sp. (strain PCC 8801)).